A 303-amino-acid chain; its full sequence is Probable 5-dehydro-4-deoxyglucarate dehydratase (303 aa).

This sequence belongs to the DapA family.

It carries out the reaction 5-dehydro-4-deoxy-D-glucarate + H(+) = 2,5-dioxopentanoate + CO2 + H2O. The protein operates within carbohydrate acid metabolism; D-glucarate degradation; 2,5-dioxopentanoate from D-glucarate: step 2/2. This Pseudomonas putida (strain ATCC 700007 / DSM 6899 / JCM 31910 / BCRC 17059 / LMG 24140 / F1) protein is Probable 5-dehydro-4-deoxyglucarate dehydratase.